The following is a 383-amino-acid chain: 3-phytase (383 aa).

Positions 1–26 (MNHSKTLLLTAAAGLMLTCGAVSSQA) are cleaved as a signal peptide. A propeptide spanning residues 27 to 30 (KHKL) is cleaved from the precursor. Positions 31-362 (SDPYHFTVNA…VPWERIADKI (332 aa)) constitute a BPP domain. The disordered stretch occupies residues 364 to 383 (FHPQVNKQVDPRKMTDRSGK). Positions 372–383 (VDPRKMTDRSGK) are enriched in basic and acidic residues.

It localises to the secreted. It carries out the reaction 1D-myo-inositol hexakisphosphate + H2O = 1D-myo-inositol 1,2,4,5,6-pentakisphosphate + phosphate. This Bacillus sp. (strain DS11) protein is 3-phytase (phy).